The sequence spans 232 residues: Nucleolar protein 16 (232 aa).

A compositionally biased stretch (basic residues) spans 1-14 (MGRELQKRKKRSSR). 2 disordered regions span residues 1-20 (MGRELQKRKKRSSRAKVQTH) and 113-161 (RSDN…QSSR). Positions 132-154 (EEPKPKNPTHDIEWHGISDDRQE) are enriched in basic and acidic residues.

Belongs to the NOP16 family. As to quaternary structure, component of the pre-66S ribosomal particle.

It localises to the nucleus. The protein resides in the nucleolus. Its function is as follows. Involved in the biogenesis of the 60S ribosomal subunit. The chain is Nucleolar protein 16 (nop-16) from Neurospora crassa (strain ATCC 24698 / 74-OR23-1A / CBS 708.71 / DSM 1257 / FGSC 987).